A 258-amino-acid polypeptide reads, in one-letter code: Acetylglutamate kinase (258 aa).

Substrate contacts are provided by residues 44–45 (GG), Arg-66, and Asn-158. Residues 181–186 (DVSGIL) and 209–211 (IIT) contribute to the ATP site.

Belongs to the acetylglutamate kinase family. ArgB subfamily. As to quaternary structure, homodimer.

The protein resides in the cytoplasm. The catalysed reaction is N-acetyl-L-glutamate + ATP = N-acetyl-L-glutamyl 5-phosphate + ADP. It functions in the pathway amino-acid biosynthesis; L-arginine biosynthesis; N(2)-acetyl-L-ornithine from L-glutamate: step 2/4. Catalyzes the ATP-dependent phosphorylation of N-acetyl-L-glutamate. The chain is Acetylglutamate kinase from Shigella flexneri.